Reading from the N-terminus, the 210-residue chain is Inner membrane-spanning protein YciB (210 aa).

Transmembrane regions (helical) follow at residues 12–32 (EVSP…FFFA), 53–73 (IFIA…ASWI), 78–98 (LPMM…LTLW), 115–135 (LFGA…GYVF), 148–168 (KLTI…EVIW), and 175–195 (FWVA…TLAQ).

The protein belongs to the YciB family.

It is found in the cell inner membrane. Plays a role in cell envelope biogenesis, maintenance of cell envelope integrity and membrane homeostasis. This Rhizobium meliloti (strain 1021) (Ensifer meliloti) protein is Inner membrane-spanning protein YciB.